The primary structure comprises 204 residues: Transcription factor bHLH120 (204 aa).

2 disordered regions span residues M1 to K27 and K93 to P116. Residues E26–T78 enclose the bHLH domain.

As to quaternary structure, homodimer.

Its subcellular location is the nucleus. The sequence is that of Transcription factor bHLH120 (BHLH120) from Arabidopsis thaliana (Mouse-ear cress).